A 233-amino-acid chain; its full sequence is Small ribosomal subunit protein uS2 (233 aa).

This sequence belongs to the universal ribosomal protein uS2 family.

In Prochlorococcus marinus (strain MIT 9312), this protein is Small ribosomal subunit protein uS2.